The chain runs to 107 residues: Small ribosomal subunit protein uS10m (107 aa).

This sequence belongs to the universal ribosomal protein uS10 family.

It is found in the mitochondrion. This chain is Small ribosomal subunit protein uS10m (RPS10), found in Prototheca wickerhamii.